The chain runs to 102 residues: RNA-binding protein Hfq (102 aa).

The region spanning 9 to 68 (DPFLNALRRERVPVSIYLVNGIKLQGQIESFDQFVILLKNTVSQMVYKHAISTVVPSRPV) is the Sm domain. Positions 63–102 (VPSRPVSHHSNNAGGGTSSNYHHGSSAQGTSAQQDSEETE) are disordered. Over residues 70–96 (HHSNNAGGGTSSNYHHGSSAQGTSAQQ) the composition is skewed to polar residues.

It belongs to the Hfq family. In terms of assembly, homohexamer.

Functionally, RNA chaperone that binds small regulatory RNA (sRNAs) and mRNAs to facilitate mRNA translational regulation in response to envelope stress, environmental stress and changes in metabolite concentrations. Also binds with high specificity to tRNAs. This chain is RNA-binding protein Hfq, found in Citrobacter koseri (strain ATCC BAA-895 / CDC 4225-83 / SGSC4696).